The chain runs to 749 residues: Small G protein signaling modulator 3 (749 aa).

Residues 113–304 (GIPHGMRPQL…RIWDLFFYEG (192 aa)) form the Rab-GAP TBC domain. Position 405 is a phosphoserine (serine 405). Residues 414–438 (EDDLEALKAKNIKQTELVADLREAI) are a coiled coil. In terms of domain architecture, SH3 spans 479–538 (SHRRRAKALLDFERHDDDELGFRKNDIITIISQKDEHCWVGELNGLRGWFPAKFVEVLDE). The RUN domain maps to 554-717 (GVTDLVRGTL…FAFSLSQDWE (164 aa)).

It belongs to the small G protein signaling modulator family. In terms of assembly, interacts with GJA1. Interaction with GJA1 induces its degradation. Interacts (via RUN domain) with NF2 (via C-terminus). Interacts with RAB3A, RAB4A, RAB5A, RAB8A, RAB11A, RAP1A, RAP1B, RAP2A, RAP2B and PDCD6I. No interaction with RAB27A. No interaction with GJB1 or GJD2. Expressed in brain, liver, kidney and testis. Moderately expressed in heart, very weakly in lung and muscle. Not expressed in spleen.

It localises to the cytoplasm. Its function is as follows. May play a cooperative role in NF2-mediated growth suppression of cells. May act as a modulator of small G protein RAB- and RAP-mediated neuronal signal transduction and vesicular transportation pathways. The protein is Small G protein signaling modulator 3 of Rattus norvegicus (Rat).